The following is a 262-amino-acid chain: DNA-directed RNA polymerase subunit Rpo3 (262 aa).

The protein belongs to the archaeal Rpo3/eukaryotic RPB3 RNA polymerase subunit family. Part of the RNA polymerase complex.

Its subcellular location is the cytoplasm. The catalysed reaction is RNA(n) + a ribonucleoside 5'-triphosphate = RNA(n+1) + diphosphate. Its function is as follows. DNA-dependent RNA polymerase (RNAP) catalyzes the transcription of DNA into RNA using the four ribonucleoside triphosphates as substrates. This chain is DNA-directed RNA polymerase subunit Rpo3, found in Pyrobaculum islandicum (strain DSM 4184 / JCM 9189 / GEO3).